The sequence spans 232 residues: Ribose-5-phosphate isomerase A (232 aa).

Substrate-binding positions include 31–34, 87–90, and 100–103; these read TGST, DGAD, and KGGG. The active-site Proton acceptor is Glu109. Residue Lys127 coordinates substrate.

The protein belongs to the ribose 5-phosphate isomerase family. As to quaternary structure, homodimer.

It catalyses the reaction aldehydo-D-ribose 5-phosphate = D-ribulose 5-phosphate. Its pathway is carbohydrate degradation; pentose phosphate pathway; D-ribose 5-phosphate from D-ribulose 5-phosphate (non-oxidative stage): step 1/1. In terms of biological role, catalyzes the reversible conversion of ribose-5-phosphate to ribulose 5-phosphate. The polypeptide is Ribose-5-phosphate isomerase A (Bifidobacterium longum (strain DJO10A)).